The sequence spans 301 residues: Probable 2-dehydro-3-deoxy-D-pentonate aldolase YjhH (301 aa).

Catalysis depends on charge relay system residues T46 and Y109. Y135 functions as the Proton donor in the catalytic mechanism. K164 functions as the Schiff-base intermediate with substrate in the catalytic mechanism.

Belongs to the DapA family.

The protein resides in the cytoplasm. It carries out the reaction 2-dehydro-3-deoxy-D-arabinonate = glycolaldehyde + pyruvate. In terms of biological role, functions as a 2-dehydro-3-deoxy-D-pentonate aldolase. The chain is Probable 2-dehydro-3-deoxy-D-pentonate aldolase YjhH (yjhH) from Escherichia coli (strain K12).